A 175-amino-acid chain; its full sequence is Putative lipoprotein LppN (175 aa).

Residues 1-20 form the signal peptide; the sequence is MRLPGRHVLYALSAVTMLAA. C21 carries N-palmitoyl cysteine lipidation. C21 carries the S-diacylglycerol cysteine lipid modification. Positions 31–56 are disordered; sequence ASTNMNPTNPPATAETATVSPTPAPQ. Positions 33-48 are enriched in low complexity; that stretch reads TNMNPTNPPATAETAT. Prevents bacterial uptake by a human macrophage-like cell line stretches follow at residues 61-80, 101-120, and 121-140; these read ETWINLQVGDCLADLPPADL, RAPVAVDAAVVSMANRDCAA, and GFAPYTGQSVDTSPYSVAYL.

The protein localises to the cell membrane. The protein resides in the cell surface. In terms of biological role, probably involved in bacterial recognition and uptake by its host (human). This chain is Putative lipoprotein LppN (lppN), found in Mycobacterium tuberculosis (strain ATCC 25618 / H37Rv).